Reading from the N-terminus, the 126-residue chain is Large ribosomal subunit protein uL22 (126 aa).

The protein belongs to the universal ribosomal protein uL22 family. As to quaternary structure, part of the 50S ribosomal subunit.

This protein binds specifically to 23S rRNA; its binding is stimulated by other ribosomal proteins, e.g. L4, L17, and L20. It is important during the early stages of 50S assembly. It makes multiple contacts with different domains of the 23S rRNA in the assembled 50S subunit and ribosome. Functionally, the globular domain of the protein is located near the polypeptide exit tunnel on the outside of the subunit, while an extended beta-hairpin is found that lines the wall of the exit tunnel in the center of the 70S ribosome. This Jannaschia sp. (strain CCS1) protein is Large ribosomal subunit protein uL22.